The sequence spans 112 residues: Replication initiation control protein YabA (112 aa).

Zn(2+) contacts are provided by H85, C87, C101, and C104.

The protein belongs to the YabA family. Homotetramer. Interacts with both DnaA and DnaN, acting as a bridge between these two proteins. Requires Zn(2+) as cofactor.

The protein localises to the cytoplasm. Its subcellular location is the nucleoid. In terms of biological role, involved in control of chromosome replication initiation. Inhibits the cooperative binding of DnaA to the oriC region, thus negatively regulating initiation of chromosome replication. Inhibits the ability of DnaA-ATP to form a helix on DNA; does not disassemble preformed DnaA-DNA helices. Decreases the residence time of DnaA on the chromosome at its binding sites (oriC, replication forks and promoter-binding sites). Tethers DnaA to the replication machinery via the DNA polymerase beta sliding clamp subunit (dnaN). Associates with oriC and other DnaA targets on the chromosome in a DnaA-dependent manner. This is Replication initiation control protein YabA from Lacticaseibacillus casei (strain BL23) (Lactobacillus casei).